The primary structure comprises 270 residues: SAMP-activating enzyme E1 (270 aa).

ATP-binding positions include Gly42, Asp63, 70–74 (SNLQR), and Lys87. Residue Lys113 forms a Glycyl lysine isopeptide (Lys-Gly) (interchain with G-Cter in SAMP2) linkage. 131-132 (DN) contributes to the ATP binding site. Residues Cys171 and Cys174 each contribute to the Zn(2+) site. Cys188 functions as the Glycyl thioester intermediate in the catalytic mechanism. Zn(2+)-binding residues include Cys245 and Cys248.

This sequence belongs to the HesA/MoeB/ThiF family. As to quaternary structure, interacts with NcsA. Requires Zn(2+) as cofactor. Sampylated at Lys-113 with the archaeal ubiquitin-like protein SAMP2. Also sampylated with SAMP1.

The catalysed reaction is [small archaeal modifier protein]-C-terminal Gly-Gly + ATP + H(+) = [small archaeal modifier protein]-C-terminal Gly-Gly-AMP + diphosphate. Functionally, likely activates multiple ubiquitin-like SAMPs for protein conjugation as well as for sulfur transfer, via ATP-dependent adenylation at their C-terminus. In fact, it is required for the formation of all three SAMP1-, SAMP2- and SAMP3-protein conjugates, and for molybdenum cofactor (MoCo) biosynthesis and thiolation of tRNAs. The sequence is that of SAMP-activating enzyme E1 (ubaA) from Haloferax volcanii (strain ATCC 29605 / DSM 3757 / JCM 8879 / NBRC 14742 / NCIMB 2012 / VKM B-1768 / DS2) (Halobacterium volcanii).